A 69-amino-acid polypeptide reads, in one-letter code: Guanine nucleotide-binding protein subunit gamma (69 aa).

Ser-2 is subject to N-acetylserine. Cys-66 carries the cysteine methyl ester modification. The S-geranylgeranyl cysteine moiety is linked to residue Cys-66. Residues 67-69 (SVL) constitute a propeptide, removed in mature form.

It belongs to the G protein gamma family. In terms of assembly, g proteins are composed of 3 units, alpha, beta and gamma. Interacts with gpbA, and this requires phlp1. In terms of processing, this protein is thought to be subject to lipidation, and this requires phlp1.

It localises to the cell membrane. Functionally, guanine nucleotide-binding proteins (G proteins) are involved as a modulator or transducer in various transmembrane signaling systems. This major G-protein of the squid photoreceptor is involved in visual transduction. The beta and gamma chains are required for the GTPase activity, for replacement of GDP by GTP, and for G protein-effector interaction. Required for normal chemotaxis in response to cAMP. The polypeptide is Guanine nucleotide-binding protein subunit gamma (gpgA) (Dictyostelium discoideum (Social amoeba)).